A 180-amino-acid polypeptide reads, in one-letter code: Cell division protein ZapC (180 aa).

This sequence belongs to the ZapC family. As to quaternary structure, interacts directly with FtsZ.

It localises to the cytoplasm. Its function is as follows. Contributes to the efficiency of the cell division process by stabilizing the polymeric form of the cell division protein FtsZ. Acts by promoting interactions between FtsZ protofilaments and suppressing the GTPase activity of FtsZ. The protein is Cell division protein ZapC of Vibrio vulnificus (strain CMCP6).